Here is a 294-residue protein sequence, read N- to C-terminus: ATP synthase gamma chain (294 aa).

It belongs to the ATPase gamma chain family. F-type ATPases have 2 components, CF(1) - the catalytic core - and CF(0) - the membrane proton channel. CF(1) has five subunits: alpha(3), beta(3), gamma(1), delta(1), epsilon(1). CF(0) has three main subunits: a, b and c.

The protein resides in the cell inner membrane. Its function is as follows. Produces ATP from ADP in the presence of a proton gradient across the membrane. The gamma chain is believed to be important in regulating ATPase activity and the flow of protons through the CF(0) complex. The polypeptide is ATP synthase gamma chain (Rhizobium rhizogenes (strain K84 / ATCC BAA-868) (Agrobacterium radiobacter)).